Here is a 427-residue protein sequence, read N- to C-terminus: MTEAMKITLSTQPADARWGEKATYSINNDGITLHLNGADDLGLIQRAARKIDGLGIKHVQLSGEGWDADRCWAFWQGYKAPKGTRKVEWPDLDDVQRQELDNRLMIIDWVRDTINAPAEELGPSQLAQRAVDLISNVAGDRVTYRITKGEDLRDQGYMGLHTVGRGSERSPVLLALDYNPTGDKEAPVYACLVGKGITFDSGGYSIKQTAFMDSMKSDMGGAATVTGALAFAITRGLNKRVKLFLCCADNLISGNAFKLGDIITYRNGKKVEVMNTDAEGRLVLADGLIDASAQKPELIIDAATLTGAAKTALGNDYHALFSFDDALAGRLLASAAQENEPFWRLPLAEFHRSQLPSNFAELNNTGSAAYPAGASTAAGFLSHFVENYQQGWLHIDCSATYRKAPVEQWSAGATGLGVRTIANLLTA.

Residues lysine 195 and aspartate 200 each contribute to the Mn(2+) site. Lysine 207 is an active-site residue. Residues aspartate 218, aspartate 277, and glutamate 279 each contribute to the Mn(2+) site. The active site involves arginine 281.

It belongs to the peptidase M17 family. As to quaternary structure, homohexamer. It depends on Mn(2+) as a cofactor.

Its subcellular location is the cytoplasm. The catalysed reaction is Release of an N-terminal amino acid, Xaa, from a peptide or arylamide. Xaa is preferably Glu or Asp but may be other amino acids, including Leu, Met, His, Cys and Gln.. Its function is as follows. Probably plays an important role in intracellular peptide degradation. The sequence is that of Peptidase B from Escherichia coli (strain SMS-3-5 / SECEC).